Consider the following 231-residue polypeptide: Lipoprotein-releasing system ATP-binding protein LolD (231 aa).

One can recognise an ABC transporter domain in the interval leucine 11–aspartate 231. Glycine 47–serine 54 lines the ATP pocket.

Belongs to the ABC transporter superfamily. Lipoprotein translocase (TC 3.A.1.125) family. The complex is composed of two ATP-binding proteins (LolD) and two transmembrane proteins (LolC and LolE).

Its subcellular location is the cell inner membrane. Part of the ABC transporter complex LolCDE involved in the translocation of mature outer membrane-directed lipoproteins, from the inner membrane to the periplasmic chaperone, LolA. Responsible for the formation of the LolA-lipoprotein complex in an ATP-dependent manner. In Bordetella bronchiseptica (strain ATCC BAA-588 / NCTC 13252 / RB50) (Alcaligenes bronchisepticus), this protein is Lipoprotein-releasing system ATP-binding protein LolD.